Here is a 689-residue protein sequence, read N- to C-terminus: DNA ligase (689 aa).

NAD(+) contacts are provided by residues 51–55 (DSEYD), 100–101 (SL), and glutamate 129. The active-site N6-AMP-lysine intermediate is the lysine 131. NAD(+)-binding residues include arginine 152, glutamate 189, lysine 308, and lysine 332. Zn(2+) contacts are provided by cysteine 426, cysteine 429, cysteine 444, and cysteine 450. The BRCT domain maps to 609–689 (ADEQPLKGQT…ELLALLAANR (81 aa)).

The protein belongs to the NAD-dependent DNA ligase family. LigA subfamily. The cofactor is Mg(2+). It depends on Mn(2+) as a cofactor.

It catalyses the reaction NAD(+) + (deoxyribonucleotide)n-3'-hydroxyl + 5'-phospho-(deoxyribonucleotide)m = (deoxyribonucleotide)n+m + AMP + beta-nicotinamide D-nucleotide.. Functionally, DNA ligase that catalyzes the formation of phosphodiester linkages between 5'-phosphoryl and 3'-hydroxyl groups in double-stranded DNA using NAD as a coenzyme and as the energy source for the reaction. It is essential for DNA replication and repair of damaged DNA. In Shewanella oneidensis (strain ATCC 700550 / JCM 31522 / CIP 106686 / LMG 19005 / NCIMB 14063 / MR-1), this protein is DNA ligase.